The following is a 314-amino-acid chain: Formylglycine-generating enzyme (314 aa).

Low complexity predominate over residues methionine 1–proline 20. Residues methionine 1–glycine 31 are disordered. Ca(2+)-binding residues include asparagine 194, isoleucine 195, aspartate 208, and histidine 210. Residues cysteine 272 and cysteine 277 each contribute to the Cu(2+) site.

It belongs to the sulfatase-modifying factor family. Cu(2+) serves as cofactor.

The catalysed reaction is L-cysteinyl-[sulfatase] + 2 a thiol + O2 = an organic disulfide + 3-oxo-L-alanyl-[sulfatase] + hydrogen sulfide + H2O + H(+). The protein operates within protein modification; sulfatase oxidation. Its function is as follows. Oxidase that catalyzes the conversion of cysteine to 3-oxoalanine on target proteins. 3-oxoalanine modification, which is also named formylglycine (fGly), occurs in the maturation of arylsulfatases and some alkaline phosphatases that use the hydrated form of 3-oxoalanine as a catalytic nucleophile. The polypeptide is Formylglycine-generating enzyme (Streptomyces coelicolor (strain ATCC BAA-471 / A3(2) / M145)).